The following is a 139-amino-acid chain: Non-structural protein 1 (139 aa).

The DLNP; interaction with MAP1B motif lies at 136–139 (DLNS).

This sequence belongs to the pneumovirus non-structural protein 1 family. In terms of assembly, monomer. Homomultimer. Heteromultimer with NS2. Interacts with the matrix protein M. Interacts with host ELOC and CUL2; this interaction allows NS1 to form an active E3 ligase with ELOC and CUL2. Interacts with host IRF3; this interaction leads to the disrupted association of IRF3 with CREBBP and thus reduced binding of IRF3 to the IFN-beta promoter. Interacts with host MAVS; this interaction prevents MAVS binding to RIGI and inhibits signaling pathway leading to interferon production. Interacts with host MAP1B/microtubule-associated protein 1B. Interacts with host TRIM25 (via SPRY domain); this interaction suppresses RIGI ubiquitination and results in decreased interaction between RIGI and MAVS.

It localises to the host cytoplasm. Its subcellular location is the host mitochondrion. It is found in the host nucleus. Functionally, plays a major role in antagonizing the type I IFN-mediated antiviral response by degrading or inhibiting multiple cellular factors required for either IFN induction or response pathways. Acts cooperatively with NS2 to repress activation and nuclear translocation of host IFN-regulatory factor IRF3. Also disrupts the association of IRF3 with CREBBP. Interacts with host mitochondrial-associated membrane (MAM) MAVS and prevents the interaction with RIGI. Interacts with TRIM25 to suppress TRIM25-mediated RIGI ubiquitination and thereby RIGI-MAVS interaction. Together with NS2, participates in the proteasomal degradation of host STAT2, IRF3, IRF7, TBK1 and RIGI through a NS-degradasome involving CUL2 and Elongin-C. The degradasome requires an intact mitochondrial MAVS. Decreases the levels of host TRAF3 and IKBKE/IKK-epsilon. As functions other than disruptions of the type I IFN-mediated antiviral signaling pathways, induces host SOCS1 and SOCS3 expression. Suppresses premature apoptosis by an NF-kappa-B-dependent, interferon-independent mechanism and thus facilitates virus growth. Additionally, NS1 may serve some inhibitory role in viral transcription and RNA replication. Suppresses proliferation and activation of host CD103+ CD8+ cytotoxic T-lymphocytes and Th17 helper T-lymphocytes. This Human respiratory syncytial virus B (strain 18537) protein is Non-structural protein 1 (1C).